We begin with the raw amino-acid sequence, 830 residues long: FYN-binding protein 1 (830 aa).

The segment at 1–501 (MDGKTDVKSL…REKKEQELRK (501 aa)) is disordered. An N6-acetyllysine modification is found at Lys13. The span at 15-55 (NTGSNPTEEVSTSSRPFKVAGQNSPSGIQSKKNLFDNQGNA) shows a compositional bias: polar residues. 2 positions are modified to phosphoserine: Ser38 and Ser56. Residues 79–89 (TYEEKSEKEPK) show a composition bias toward basic and acidic residues. Ser233 is modified (phosphoserine). Composition is skewed to basic and acidic residues over residues 248 to 259 (PAKEDPEDKDHG) and 284 to 296 (NSEEKKEERKTDI). Ser329 carries the post-translational modification Phosphoserine. Basic and acidic residues predominate over residues 330–339 (QEKEGDKDSA). 2 stretches are compositionally biased toward pro residues: residues 344-362 (KPLPPLSVLGPPPSKPSRP) and 391-407 (LPPPPPTQPASQPPLPA). The segment at 347 to 447 (PPLSVLGPPP…QDGVMHSDGT (101 aa)) is interaction with SKAP1. Residues 450–464 (LEEEQESDGEMYEDI) show a composition bias toward acidic residues. Phosphoserine is present on Ser456. An SH2-binding motif is present at residues 461 to 464 (YEDI). Residues 465-500 (ESSKERDKKREKEEKKRLELERKEQKEREKKEQELR) show a composition bias toward basic and acidic residues. A coiled-coil region spans residues 465 to 502 (ESSKERDKKREKEEKKRLELERKEQKEREKKEQELRKK). The Nuclear localization signal motif lies at 479–486 (KKRLELER). In terms of domain architecture, SH3 1 spans 510–571 (QVIHHAKACC…KTTAVKIDYD (62 aa)). A Phosphotyrosine modification is found at Tyr570. At Ser572 the chain carries Phosphoserine. The short motif at 595-598 (YDDV) is the SH2-binding; to LCP2 element. Disordered stretches follow at residues 601–646 (QDAP…DEKT) and 660–739 (KDER…EKEE). A compositionally biased stretch (acidic residues) spans 621–636 (ADDDIYDGIEEEDADD). An SH2-binding; to FYN motif is present at residues 626–629 (YDGI). Positions 660 to 675 (KDERKKSIREKPKVSE) are enriched in basic and acidic residues. Over residues 693–703 (VGEEVYDDVDA) the composition is skewed to acidic residues. Position 698 is a phosphotyrosine (Tyr698). A compositionally biased stretch (basic and acidic residues) spans 722–739 (TKAEEKDPKKLKKQEKEE). A Nuclear localization signal motif is present at residues 732-739 (LKKQEKEE). An SH3 2 domain is found at 747 to 815 (KYDGEIRVLY…LRSYLVDNDG (69 aa)).

Part of a complex consisting of SKAP2, FYB1 and PTPNS1. Part of a complex consisting of SKAP2, FYB1 and LILRB3. Part of a complex consisting of SKAP1, FYB1 and CLNK. Interacts with CLNK (via its SH2 domain) and FYN; this interaction allows SKAP1 and FYB1 to recruit FYN to the complex, thus promoting the phosphorylation of CLNK by FYN. Interacts with FYN. Interacts with LCP2. Interacts with SKAP1. Interacts with SKAP2. Interacts with FASLG. Interacts with EVL. Interacts with TMEM47. Interacts with LCK. Post-translationally, T-cell receptor ligation leads to increased tyrosine phosphorylation.

The protein resides in the cytoplasm. The protein localises to the nucleus. Its subcellular location is the cell junction. Acts as an adapter protein of the FYN and LCP2 signaling cascades in T-cells. May play a role in linking T-cell signaling to remodeling of the actin cytoskeleton. Modulates the expression of IL2. Involved in platelet activation. Prevents the degradation of SKAP1 and SKAP2. May be involved in high affinity immunoglobulin epsilon receptor signaling in mast cells. This Rattus norvegicus (Rat) protein is FYN-binding protein 1.